Reading from the N-terminus, the 2621-residue chain is Nonribosomal peptide synthetase dtpA (2621 aa).

The tract at residues 446 to 844 (CMEQPNAEAI…GRKDQQVKIR (399 aa)) is adenylation 1. One can recognise a Carrier 1 domain in the interval 978–1054 (QPYTQVEETL…EVALYSRALS (77 aa)). Position 1015 is an O-(pantetheine 4'-phosphoryl)serine (Ser1015). The condensation 1 stretch occupies residues 1095 to 1506 (EDIYPCTALQ…LNQLELAGPQ (412 aa)). The adenylation 2 stretch occupies residues 1534-1930 (SRTQPGASAI…GRRDNQVKLR (397 aa)). Residues 2071–2147 (QPSTTQEALV…LFCTNASTSI (77 aa)) enclose the Carrier 2 domain. The residue at position 2108 (Ser2108) is an O-(pantetheine 4'-phosphoryl)serine. The condensation 2 stretch occupies residues 2220–2618 (AIFKLHGSKV…HSARPIASID (399 aa)).

This sequence belongs to the NRP synthetase family.

It participates in alkaloid biosynthesis. Functionally, nonribosomal peptide synthetase; part of the gene cluster that mediates the biosynthesis of the dimeric diketopiperazine alkaloid ditryptophenaline. The nonribosomal peptide synthase dtpA accepts L-tryptophan and L-phenylalanine as its substrates and forms the phenylalanyl-tryptophanyl cyclic dipeptide product cyclophenylalanyltryptophenyl. The N-methyltransferase dtpB is responsible for the N-methylation of cyclophenylalanyltryptophenyl to yield cyclo-N-methylphenylalanyltryptophenyl. The cytochrome P450 monooxygenase is responsible not only for pyrroloindole ring formation but also for concurrent dimerization of N-methylphenylalanyltryptophanyl diketopiperazine monomers into a homodimeric product. This Aspergillus flavus (strain ATCC 200026 / FGSC A1120 / IAM 13836 / NRRL 3357 / JCM 12722 / SRRC 167) protein is Nonribosomal peptide synthetase dtpA.